Here is a 24-residue protein sequence, read N- to C-terminus: Lectin (24 aa).

The segment covering 1–18 has biased composition (polar residues); sequence AEEQSFSSTKFSTDQPNL. The segment at 1–24 is disordered; it reads AEEQSFSSTKFSTDQPNLILQGDA.

Belongs to the leguminous lectin family. As to quaternary structure, homotetramer.

This is Lectin from Crotalaria juncea (Sunn hemp).